Consider the following 548-residue polypeptide: Elongator complex protein 3 (548 aa).

One can recognise a Radical SAM core domain in the interval 83–373 (RTASGIAVVA…YRVQRDIPMP (291 aa)). [4Fe-4S] cluster is bound by residues C100, C110, and C113. Residues K165, 475-478 (ELHV), 498-500 (FGM), and Y531 contribute to the acetyl-CoA site. Residues 397–548 (TECRDVRTRE…EGPYMVKNLY (152 aa)) form the N-acetyltransferase domain.

Belongs to the ELP3 family. As to quaternary structure, component of the elongator complex. It depends on [4Fe-4S] cluster as a cofactor.

The protein localises to the cytoplasm. Its subcellular location is the nucleus. The enzyme catalyses uridine(34) in tRNA + acetyl-CoA + S-adenosyl-L-methionine + H2O = 5-(carboxymethyl)uridine(34) in tRNA + 5'-deoxyadenosine + L-methionine + CoA + 2 H(+). Its pathway is tRNA modification; 5-methoxycarbonylmethyl-2-thiouridine-tRNA biosynthesis. Its function is as follows. Catalytic tRNA acetyltransferase subunit of the elongator complex which is required for multiple tRNA modifications, including mcm5U (5-methoxycarbonylmethyl uridine), mcm5s2U (5-methoxycarbonylmethyl-2-thiouridine), and ncm5U (5-carbamoylmethyl uridine). In the elongator complex, acts as a tRNA uridine(34) acetyltransferase by mediating formation of carboxymethyluridine in the wobble base at position 34 in tRNAs. Involved in neurogenesis. Involved in somite development. The sequence is that of Elongator complex protein 3 from Danio rerio (Zebrafish).